Here is a 269-residue protein sequence, read N- to C-terminus: 4-hydroxy-tetrahydrodipicolinate reductase (269 aa).

Residues 10–15 (GANGRM), glutamate 36, 99–101 (GTT), and 123–126 (AANF) each bind NAD(+). Catalysis depends on histidine 156, which acts as the Proton donor/acceptor. Histidine 157 lines the (S)-2,3,4,5-tetrahydrodipicolinate pocket. The active-site Proton donor is lysine 160. Residue 166 to 167 (GT) participates in (S)-2,3,4,5-tetrahydrodipicolinate binding.

Belongs to the DapB family.

The protein localises to the cytoplasm. The enzyme catalyses (S)-2,3,4,5-tetrahydrodipicolinate + NAD(+) + H2O = (2S,4S)-4-hydroxy-2,3,4,5-tetrahydrodipicolinate + NADH + H(+). The catalysed reaction is (S)-2,3,4,5-tetrahydrodipicolinate + NADP(+) + H2O = (2S,4S)-4-hydroxy-2,3,4,5-tetrahydrodipicolinate + NADPH + H(+). It functions in the pathway amino-acid biosynthesis; L-lysine biosynthesis via DAP pathway; (S)-tetrahydrodipicolinate from L-aspartate: step 4/4. Catalyzes the conversion of 4-hydroxy-tetrahydrodipicolinate (HTPA) to tetrahydrodipicolinate. This is 4-hydroxy-tetrahydrodipicolinate reductase from Neisseria meningitidis serogroup A / serotype 4A (strain DSM 15465 / Z2491).